Reading from the N-terminus, the 262-residue chain is Ornithine carbamoyltransferase (262 aa).

Residues 3-7 (STRTR), glutamine 30, arginine 54, and 81-84 (HPTQ) contribute to the carbamoyl phosphate site. Residues asparagine 114, aspartate 178, and 182–183 (SM) contribute to the L-ornithine site. Carbamoyl phosphate-binding positions include 219 to 222 (HCLP) and threonine 247.

It belongs to the aspartate/ornithine carbamoyltransferase superfamily. OTCase family.

Its subcellular location is the cytoplasm. The catalysed reaction is carbamoyl phosphate + L-ornithine = L-citrulline + phosphate + H(+). It participates in amino-acid biosynthesis; L-arginine biosynthesis; L-arginine from L-ornithine and carbamoyl phosphate: step 1/3. The chain is Ornithine carbamoyltransferase (argF) from Neisseria cinerea.